A 77-amino-acid polypeptide reads, in one-letter code: Large ribosomal subunit protein bL28 (77 aa).

The protein belongs to the bacterial ribosomal protein bL28 family.

The polypeptide is Large ribosomal subunit protein bL28 (Acidovorax ebreus (strain TPSY) (Diaphorobacter sp. (strain TPSY))).